The primary structure comprises 1160 residues: ATP-dependent helicase/deoxyribonuclease subunit B (1160 aa).

This sequence belongs to the helicase family. AddB/RexB type 2 subfamily. As to quaternary structure, heterodimer of AddA and RexB. Requires Mg(2+) as cofactor.

The heterodimer acts as both an ATP-dependent DNA helicase and an ATP-dependent, dual-direction single-stranded exonuclease. Recognizes the chi site generating a DNA molecule suitable for the initiation of homologous recombination. This subunit has 5' -&gt; 3' nuclease activity but not helicase activity. The sequence is that of ATP-dependent helicase/deoxyribonuclease subunit B from Lactobacillus helveticus (strain DPC 4571).